A 139-amino-acid chain; its full sequence is Fluoroacetyl-CoA thioesterase (139 aa).

Residues 40–50 (FATGFMVGLME) and G69 each bind substrate. Active-site residues include T42 and E50. CoA-binding positions include G69 and 76 to 77 (HT). Residue H76 is part of the active site. R120 lines the substrate pocket.

As to quaternary structure, homodimer.

It catalyses the reaction fluoroacetyl-CoA + H2O = fluoroacetate + CoA + H(+). In terms of biological role, hydrolyzes fluoroacetyl-CoA before it can react with citrate synthase, and thus confers fluoroacetate resistance. Cannot use acetyl-CoA as substrate. In Streptantibioticus cattleyicolor (Streptomyces cattleya), this protein is Fluoroacetyl-CoA thioesterase (flK).